Consider the following 590-residue polypeptide: Major surface protein MspTL (590 aa).

Positions Met1 to Ala19 are cleaved as a signal peptide.

It is found in the cell outer membrane. In terms of biological role, major component of the outer membrane. The protein is Major surface protein MspTL (mspTL) of Treponema lecithinolyticum.